The chain runs to 229 residues: 4-hydroxy-tetrahydrodipicolinate reductase (229 aa).

NAD(+) is bound by residues 10-15, 78-80, and 102-105; these read GSAGRM, GTT, and SSNM. His-133 serves as the catalytic Proton donor/acceptor. Residue His-134 coordinates (S)-2,3,4,5-tetrahydrodipicolinate. Residue Lys-137 is the Proton donor of the active site. Residue 143 to 144 participates in (S)-2,3,4,5-tetrahydrodipicolinate binding; that stretch reads GT.

Belongs to the DapB family.

The protein resides in the cytoplasm. It catalyses the reaction (S)-2,3,4,5-tetrahydrodipicolinate + NAD(+) + H2O = (2S,4S)-4-hydroxy-2,3,4,5-tetrahydrodipicolinate + NADH + H(+). The catalysed reaction is (S)-2,3,4,5-tetrahydrodipicolinate + NADP(+) + H2O = (2S,4S)-4-hydroxy-2,3,4,5-tetrahydrodipicolinate + NADPH + H(+). It participates in amino-acid biosynthesis; L-lysine biosynthesis via DAP pathway; (S)-tetrahydrodipicolinate from L-aspartate: step 4/4. Catalyzes the conversion of 4-hydroxy-tetrahydrodipicolinate (HTPA) to tetrahydrodipicolinate. In Bdellovibrio bacteriovorus (strain ATCC 15356 / DSM 50701 / NCIMB 9529 / HD100), this protein is 4-hydroxy-tetrahydrodipicolinate reductase.